The chain runs to 484 residues: tRNA sulfurtransferase (484 aa).

Positions Q63–Q167 constitute a THUMP domain. ATP contacts are provided by residues L185 to M186, K267, G289, and Q298. Cysteines 346 and 457 form a disulfide. One can recognise a Rhodanese domain in the interval A405–P483. The active-site Cysteine persulfide intermediate is the C457.

This sequence belongs to the ThiI family.

It localises to the cytoplasm. It carries out the reaction [ThiI sulfur-carrier protein]-S-sulfanyl-L-cysteine + a uridine in tRNA + 2 reduced [2Fe-2S]-[ferredoxin] + ATP + H(+) = [ThiI sulfur-carrier protein]-L-cysteine + a 4-thiouridine in tRNA + 2 oxidized [2Fe-2S]-[ferredoxin] + AMP + diphosphate. The enzyme catalyses [ThiS sulfur-carrier protein]-C-terminal Gly-Gly-AMP + S-sulfanyl-L-cysteinyl-[cysteine desulfurase] + AH2 = [ThiS sulfur-carrier protein]-C-terminal-Gly-aminoethanethioate + L-cysteinyl-[cysteine desulfurase] + A + AMP + 2 H(+). The protein operates within cofactor biosynthesis; thiamine diphosphate biosynthesis. Its function is as follows. Catalyzes the ATP-dependent transfer of a sulfur to tRNA to produce 4-thiouridine in position 8 of tRNAs, which functions as a near-UV photosensor. Also catalyzes the transfer of sulfur to the sulfur carrier protein ThiS, forming ThiS-thiocarboxylate. This is a step in the synthesis of thiazole, in the thiamine biosynthesis pathway. The sulfur is donated as persulfide by IscS. The protein is tRNA sulfurtransferase of Pseudomonas syringae pv. tomato (strain ATCC BAA-871 / DC3000).